A 515-amino-acid chain; its full sequence is Histidine ammonia-lyase (515 aa).

A cross-link (5-imidazolinone (Ala-Gly)) is located at residues 145–147 (ASG). At serine 146 the chain carries 2,3-didehydroalanine (Ser).

The protein belongs to the PAL/histidase family. In terms of processing, contains an active site 4-methylidene-imidazol-5-one (MIO), which is formed autocatalytically by cyclization and dehydration of residues Ala-Ser-Gly.

The protein resides in the cytoplasm. The catalysed reaction is L-histidine = trans-urocanate + NH4(+). It participates in amino-acid degradation; L-histidine degradation into L-glutamate; N-formimidoyl-L-glutamate from L-histidine: step 1/3. This is Histidine ammonia-lyase from Gluconacetobacter diazotrophicus (strain ATCC 49037 / DSM 5601 / CCUG 37298 / CIP 103539 / LMG 7603 / PAl5).